Reading from the N-terminus, the 1637-residue chain is Acrosomal protein KIAA1210 (1637 aa).

Disordered regions lie at residues 44 to 121, 141 to 293, 341 to 404, 438 to 759, 865 to 896, 935 to 975, 1017 to 1057, 1090 to 1137, 1182 to 1238, and 1539 to 1558; these read RFSS…LSIS, RTTT…KNEW, PTTT…KKKD, VCGE…SQSE, PKLP…EGST, SKYS…FQPL, LQPW…IPSQ, FPFQ…SRRA, SQTI…SKSF, and NKGD…PAFS. Residues 103–114 are compositionally biased toward basic residues; that stretch reads HRSKSLKIKSQR. Residues 141 to 156 are compositionally biased toward low complexity; that stretch reads RTTTTFRRRSSQCSST. Residues 170–190 show a composition bias toward polar residues; the sequence is SESSTQQFSGFSTPATSQGCL. Residues 229–249 are compositionally biased toward basic and acidic residues; sequence AKEKTTTKTKEAEQGEQKVDS. The segment covering 250-261 has biased composition (low complexity); the sequence is TELSSQEQSSKT. Over residues 341–353 the composition is skewed to polar residues; sequence PTTTEAEVTTVQK. The segment covering 355–374 has biased composition (basic and acidic residues); that stretch reads PSDKGDVERELADIDVEAQK. Positions 508–526 are enriched in low complexity; the sequence is TGETSSDSKSTSEYESSSE. Residues 550–572 show a composition bias toward acidic residues; it reads ADDEEDGDDEKEEKDNDDDDEEN. Positions 689–698 are enriched in low complexity; it reads DLSSSEQEQQ. Polar residues-rich tracts occupy residues 745 to 759, 879 to 896, 935 to 956, 964 to 975, and 1017 to 1030; these read SPTQ…SQSE, GKQS…EGST, SKYS…STSA, SQPSVTPKFQPL, and LQPW…QVSV.

Interacts with TOP2B. Predominantly expressed in testis (at protein level).

The protein localises to the cytoplasmic vesicle. The protein resides in the secretory vesicle. Its subcellular location is the acrosome. This Mus musculus (Mouse) protein is Acrosomal protein KIAA1210.